A 143-amino-acid chain; its full sequence is Transcriptional regulator MraZ (143 aa).

2 consecutive SpoVT-AbrB domains span residues 5-47 (EFEH…PMTE) and 76-119 (ATEC…SAER).

It belongs to the MraZ family. Forms oligomers.

Its subcellular location is the cytoplasm. The protein localises to the nucleoid. This is Transcriptional regulator MraZ from Levilactobacillus brevis (strain ATCC 367 / BCRC 12310 / CIP 105137 / JCM 1170 / LMG 11437 / NCIMB 947 / NCTC 947) (Lactobacillus brevis).